The primary structure comprises 957 residues: Glycine dehydrogenase (decarboxylating) (957 aa).

Position 708 is an N6-(pyridoxal phosphate)lysine (K708).

It belongs to the GcvP family. The glycine cleavage system is composed of four proteins: P, T, L and H. The cofactor is pyridoxal 5'-phosphate.

The enzyme catalyses N(6)-[(R)-lipoyl]-L-lysyl-[glycine-cleavage complex H protein] + glycine + H(+) = N(6)-[(R)-S(8)-aminomethyldihydrolipoyl]-L-lysyl-[glycine-cleavage complex H protein] + CO2. Functionally, the glycine cleavage system catalyzes the degradation of glycine. The P protein binds the alpha-amino group of glycine through its pyridoxal phosphate cofactor; CO(2) is released and the remaining methylamine moiety is then transferred to the lipoamide cofactor of the H protein. The protein is Glycine dehydrogenase (decarboxylating) of Shigella sonnei (strain Ss046).